A 285-amino-acid polypeptide reads, in one-letter code: MRPMTHVPVLYQEALDLLAVRPGGVYVDATLGGAGHARGILERGGRVIGLDQDPEAVARAKGLHLPGLTVVQGNFRHLKRHLAALGVERVDGILADLGVSSFHLDDPSRGFSYQKEGPLDMRMGLEGPTAKEVVNRLPLEALARLLRELGEEPQAYRIARAIVAAREKAPIETTTQLAEIVRKAVGFRRAGHPARKTFQALRIYVNDELNALKEFLEQAAEVLAPGGRLVVIAFHSLEDRVVKRFLRESGLKVLTKKPLVPSEKEAAQNPRARSAKLRAAEKEAP.

S-adenosyl-L-methionine contacts are provided by residues 34 to 36 (AGH), D51, F75, D96, and H103. The interval 259 to 285 (LVPSEKEAAQNPRARSAKLRAAEKEAP) is disordered.

It belongs to the methyltransferase superfamily. RsmH family.

The protein resides in the cytoplasm. The catalysed reaction is cytidine(1402) in 16S rRNA + S-adenosyl-L-methionine = N(4)-methylcytidine(1402) in 16S rRNA + S-adenosyl-L-homocysteine + H(+). In terms of biological role, specifically methylates the N4 position of cytidine in position 1402 (C1402) of 16S rRNA. The protein is Ribosomal RNA small subunit methyltransferase H of Thermus thermophilus (strain ATCC 27634 / DSM 579 / HB8).